The sequence spans 66 residues: Sodium/potassium-transporting ATPase subunit gamma (66 aa).

Residues 29–46 traverse the membrane as a helical segment; it reads GGLIFAGLAFVVGLLILL.

Belongs to the FXYD family. Regulatory subunit of the sodium/potassium-transporting ATPase which is composed of a catalytic alpha subunit, an auxiliary non-catalytic beta subunit and an additional regulatory subunit. As to expression, highest levels expressed in the kidney and spleen. Restricted to the basolateral membrane in renal epithelial cells and varies in its level of expression along the nephron.

It localises to the membrane. In terms of biological role, may be involved in forming the receptor site for cardiac glycoside binding or may modulate the transport function of the sodium ATPase. The polypeptide is Sodium/potassium-transporting ATPase subunit gamma (Fxyd2) (Rattus norvegicus (Rat)).